A 291-amino-acid polypeptide reads, in one-letter code: MANAKEIRTKIASVQNTQKITSAMEMVAASKMRKVQDNMAATRPYAENMRKVISHVASGSLEYKHPYLEEREAKRVAYIIISSDRGLCGGLNSNLFKRALTDMRQWQEKNVEVDLTLIGSKAISFFHRFGNVIAQTSGLGDKPKLEDLLGAVTAMLEHFDDGKIDRLYLVYNEFVNTMVQNPRITQLLPHPDKDESQDSKPNDATSRWDYIYEPDPKDILNALMLRYIESQVYQGTVESIACEQAARMVAMKSATDNAGDIINDLQLVYNKARQSAITQELSEIVAGAQAV.

Residues 187–208 (LLPHPDKDESQDSKPNDATSRW) form a disordered region. Positions 190–201 (HPDKDESQDSKP) are enriched in basic and acidic residues.

It belongs to the ATPase gamma chain family. In terms of assembly, F-type ATPases have 2 components, CF(1) - the catalytic core - and CF(0) - the membrane proton channel. CF(1) has five subunits: alpha(3), beta(3), gamma(1), delta(1), epsilon(1). CF(0) has three main subunits: a, b and c.

The protein localises to the cell inner membrane. Functionally, produces ATP from ADP in the presence of a proton gradient across the membrane. The gamma chain is believed to be important in regulating ATPase activity and the flow of protons through the CF(0) complex. In Photobacterium profundum (strain SS9), this protein is ATP synthase gamma chain 2.